The primary structure comprises 560 residues: Mitochondria-eating protein (560 aa).

Residues 1-294 (MADNLRKLVS…SHSRNHSRSR (294 aa)) form an interaction with YWHAG/14-3-3 protein gamma region. Ser13, Ser85, Ser156, and Ser159 each carry phosphoserine. 2 coiled-coil regions span residues 118-186 (DRNI…SRHR) and 223-248 (DYEK…LQGR). 2 disordered regions span residues 178-217 (QAQE…AQRK) and 243-316 (SVLQ…AKLS). The span at 181–209 (EESRHRPPEHRSSEKRGSERRRVEPRGAD) shows a compositional bias: basic and acidic residues. The segment covering 248–262 (RSTRSRSPSPASCSR) has biased composition (low complexity). Residues 263–293 (SRSHSHSRSRSHSHSRSGSHSRSHSRNHSRS) show a composition bias toward basic residues. Over residues 300–310 (TAVSGVRSPSP) the composition is skewed to polar residues. Phosphoserine occurs at positions 307, 309, and 531.

This sequence belongs to the MIEAP family. In terms of assembly, interacts (via coiled-coil domains) with BNIP3L (via BH3 domain). Interacts (via coiled-coil domains) with BNIP3 (via BH3 domain). Interacts with YWHAG/14-3-3 protein gamma; a protein that also plays a role in MALM.

Its subcellular location is the cytoplasm. The protein resides in the cytosol. It is found in the mitochondrion outer membrane. It localises to the mitochondrion matrix. Functionally, key regulator of mitochondrial quality that mediates the repairing or degradation of unhealthy mitochondria in response to mitochondrial damage. Mediator of mitochondrial protein catabolic process (also named MALM) by mediating the degradation of damaged proteins inside mitochondria by promoting the accumulation in the mitochondrial matrix of hydrolases that are characteristic of the lysosomal lumen. Also involved in mitochondrion degradation of damaged mitochondria by promoting the formation of vacuole-like structures (named MIV), which engulf and degrade unhealthy mitochondria by accumulating lysosomes. The physical interaction of SPATA18/MIEAP, BNIP3 and BNIP3L/NIX at the mitochondrial outer membrane regulates the opening of a pore in the mitochondrial double membrane in order to mediate the translocation of lysosomal proteins from the cytoplasm to the mitochondrial matrix. Binds cardiolipin. May form molecular condensates (non-membrane-bounded organelles) within mitochondria that compartmentalize and promote cardiolipin metabolism. This Sus scrofa (Pig) protein is Mitochondria-eating protein (SPATA18).